The primary structure comprises 590 residues: Aspartate--tRNA ligase (590 aa).

Residue Glu180 participates in L-aspartate binding. Residues 204 to 207 (QLFK) are aspartate. Position 226 (Arg226) interacts with L-aspartate. ATP is bound by residues 226–228 (RDE) and Gln235. His454 serves as a coordination point for L-aspartate. Glu488 contributes to the ATP binding site. Position 495 (Arg495) interacts with L-aspartate. 540-543 (GFDR) contacts ATP.

Belongs to the class-II aminoacyl-tRNA synthetase family. Type 1 subfamily. As to quaternary structure, homodimer.

It is found in the cytoplasm. It carries out the reaction tRNA(Asp) + L-aspartate + ATP = L-aspartyl-tRNA(Asp) + AMP + diphosphate. Functionally, catalyzes the attachment of L-aspartate to tRNA(Asp) in a two-step reaction: L-aspartate is first activated by ATP to form Asp-AMP and then transferred to the acceptor end of tRNA(Asp). The sequence is that of Aspartate--tRNA ligase from Clostridium kluyveri (strain NBRC 12016).